The following is a 314-amino-acid chain: 4-hydroxy-3-methylbut-2-enyl diphosphate reductase (314 aa).

Cysteine 12 is a binding site for [4Fe-4S] cluster. Histidine 41 and histidine 74 together coordinate (2E)-4-hydroxy-3-methylbut-2-enyl diphosphate. Histidine 41 and histidine 74 together coordinate dimethylallyl diphosphate. The isopentenyl diphosphate site is built by histidine 41 and histidine 74. Residue cysteine 96 participates in [4Fe-4S] cluster binding. Histidine 124 provides a ligand contact to (2E)-4-hydroxy-3-methylbut-2-enyl diphosphate. Position 124 (histidine 124) interacts with dimethylallyl diphosphate. Histidine 124 is a binding site for isopentenyl diphosphate. The active-site Proton donor is the glutamate 126. Threonine 167 serves as a coordination point for (2E)-4-hydroxy-3-methylbut-2-enyl diphosphate. Cysteine 197 contacts [4Fe-4S] cluster. Residues serine 225, serine 226, asparagine 227, and serine 269 each coordinate (2E)-4-hydroxy-3-methylbut-2-enyl diphosphate. 4 residues coordinate dimethylallyl diphosphate: serine 225, serine 226, asparagine 227, and serine 269. The isopentenyl diphosphate site is built by serine 225, serine 226, asparagine 227, and serine 269.

It belongs to the IspH family. The cofactor is [4Fe-4S] cluster.

The enzyme catalyses isopentenyl diphosphate + 2 oxidized [2Fe-2S]-[ferredoxin] + H2O = (2E)-4-hydroxy-3-methylbut-2-enyl diphosphate + 2 reduced [2Fe-2S]-[ferredoxin] + 2 H(+). It catalyses the reaction dimethylallyl diphosphate + 2 oxidized [2Fe-2S]-[ferredoxin] + H2O = (2E)-4-hydroxy-3-methylbut-2-enyl diphosphate + 2 reduced [2Fe-2S]-[ferredoxin] + 2 H(+). It participates in isoprenoid biosynthesis; dimethylallyl diphosphate biosynthesis; dimethylallyl diphosphate from (2E)-4-hydroxy-3-methylbutenyl diphosphate: step 1/1. It functions in the pathway isoprenoid biosynthesis; isopentenyl diphosphate biosynthesis via DXP pathway; isopentenyl diphosphate from 1-deoxy-D-xylulose 5-phosphate: step 6/6. In terms of biological role, catalyzes the conversion of 1-hydroxy-2-methyl-2-(E)-butenyl 4-diphosphate (HMBPP) into a mixture of isopentenyl diphosphate (IPP) and dimethylallyl diphosphate (DMAPP). Acts in the terminal step of the DOXP/MEP pathway for isoprenoid precursor biosynthesis. In Haemophilus influenzae (strain ATCC 51907 / DSM 11121 / KW20 / Rd), this protein is 4-hydroxy-3-methylbut-2-enyl diphosphate reductase.